We begin with the raw amino-acid sequence, 184 residues long: Flavodoxin FldP (184 aa).

A Flavodoxin-like domain is found at 4 to 176 (AVVVYFSGYG…TVKLYAARVA (173 aa)). Residues 10-14 (SGYGH) and 91-147 (GFTN…SVGA) each bind FMN.

It belongs to the FldP flavodoxin family. FMN is required as a cofactor.

Its function is as follows. Flavodoxins are low-potential electron donors to a number of redox enzymes. FldP protects the cell from oxidative stress and reactive oxygen species (ROS) damage, thereby expanding the capabilities of P.aeruginosa to thrive in hostile environments, and contributes to bacterial survival within the host. In vitro, is able to mediate ferredoxin-NADP(H) reductase (FNR)-driven cytochrome c reduction. This is Flavodoxin FldP from Pseudomonas aeruginosa (strain UCBPP-PA14).